A 523-amino-acid chain; its full sequence is Synaptotagmin-10 (523 aa).

Residues 1–55 (MSFRKEDGVSSLCQKALHIITELCFAGQVEWDKCSGIFPADRSGQGGGGTDISVS) lie on the Vesicular side of the membrane. The segment at 13–35 (CQKALHIITELCFAGQVEWDKCS) is cysteine motif. Residues 56–76 (LLAVVVSFCGLALLVVSLFVF) form a helical membrane-spanning segment. The Cytoplasmic portion of the chain corresponds to 77 to 523 (WKLCWPCWKS…CSSPRPPSTP (447 aa)). Thr-136 is subject to Phosphothreonine. C2 domains lie at 231–352 (TCGK…TVWK) and 363–496 (DLGE…THWH). Positions 262, 268, 320, 321, 322, 325, 328, 394, 400, 454, and 456 each coordinate Ca(2+).

The protein belongs to the synaptotagmin family. Homodimer; disulfide-linked via the cysteine motif. Can also form heterodimers with SYT3, SYT6, SYT7 and SYT9. Requires Ca(2+) as cofactor. As to expression, highly expressed in the olfactory bulb.

The protein localises to the cytoplasmic vesicle. It is found in the secretory vesicle membrane. Functionally, ca(2+) sensor specifically required for the Ca(2+)-dependent exocytosis of secretory vesicles containing IGF1 in neurons of the olfactory bulb. Exocytosis of IGF1 is required for sensory perception of smell. Not involved in Ca(2+)-dependent synaptic vesicle exocytosis. Acts through Ca(2+) and phospholipid binding to the C2 domain: Ca(2+) induces binding of the C2-domains to phospholipid membranes and to assembled SNARE-complexes; both actions contribute to triggering exocytosis. The chain is Synaptotagmin-10 from Mus musculus (Mouse).